Here is a 504-residue protein sequence, read N- to C-terminus: Maturase K (504 aa).

Belongs to the intron maturase 2 family. MatK subfamily.

It is found in the plastid. The protein localises to the chloroplast. Usually encoded in the trnK tRNA gene intron. Probably assists in splicing its own and other chloroplast group II introns. The polypeptide is Maturase K (Fagus hayatae (Formosan elm)).